Here is a 291-residue protein sequence, read N- to C-terminus: Glutathione S-transferase 2 (291 aa).

Residues Ser-2–Ala-83 enclose the GST N-terminal domain. Glutathione is bound by residues His-41–Lys-42, Lys-54–Met-55, and Lys-67–Ser-68. Residues Gly-93–Phe-223 form the GST C-terminal domain.

The protein belongs to the GST superfamily. Phi family.

It carries out the reaction RX + glutathione = an S-substituted glutathione + a halide anion + H(+). In terms of biological role, conjugation of reduced glutathione to a wide number of exogenous and endogenous hydrophobic electrophiles. In Triticum aestivum (Wheat), this protein is Glutathione S-transferase 2 (GSTA2).